An 814-amino-acid polypeptide reads, in one-letter code: Rho GTPase-activating protein 44 (814 aa).

The region spanning 14–249 is the BAR domain; it reads QTVGRAEKTE…IKAQQEAWVE (236 aa). Positions 255–445 constitute a Rho-GAP domain; that stretch reads KPLEEHLMIS…PIIQHADWFF (191 aa). Disordered stretches follow at residues 467 to 493, 528 to 769, and 784 to 814; these read ANYS…RPLS, RGSS…MSTD, and STLR…STAL. The segment covering 479-489 has biased composition (basic and acidic residues); it reads PADRRQPEQAR. Ser-493 carries the phosphoserine modification. Low complexity-rich tracts occupy residues 567-581, 598-612, 622-637, 684-704, and 741-752; these read SPAT…SGAS, SPGS…SIQG, PQPA…DQSP, SPYG…LSPA, and SVSLSASSPQST. Residues 727–814 are interaction with BST2; sequence KPRQRPTLPP…SEEESESTAL (88 aa). The span at 790–805 shows a compositional bias: basic and acidic residues; sequence PLEHARRHSATDKRDS. At Ser-805 the chain carries Phosphoserine. Positions 811 to 814 match the PDZ-binding motif; the sequence is STAL.

As to quaternary structure, interacts with BST2 (via cytoplasmic domain). Interacts (probably via PDZ-binding motif) with SHANK3 (via PDZ domain); the interaction takes place in dendritic spines and promotes GRIA1 exocytosis. Specifically expressed in brain (at protein level). Detected in olfactory bulb, cortex, hippocampus, diencephalon and cerebellum (at protein level). Expressed in hippocampal neurons (at protein level).

It localises to the cell projection. Its subcellular location is the dendritic spine. The protein resides in the recycling endosome. It is found in the presynapse. The protein localises to the dendrite. GTPase-activating protein (GAP) that stimulates the GTPase activity of Rho-type GTPases. Thereby, controls Rho-type GTPases cycling between their active GTP-bound and inactive GDP-bound states. Acts as a GAP at least for CDC42 and RAC1. In neurons, is involved in dendritic spine formation and synaptic plasticity in a specific RAC1-GAP activity. Limits the initiation of exploratory dendritic filopodia. Recruited to actin-patches that seed filopodia, binds specifically to plasma membrane sections that are deformed inward by acto-myosin mediated contractile forces. Acts through GAP activity on RAC1 to reduce actin polymerization necessary for filopodia formation. In association with SHANK3, promotes GRIA1 exocytosis from recycling endosomes and spine morphological changes associated to long-term potentiation. The sequence is that of Rho GTPase-activating protein 44 from Mus musculus (Mouse).